A 369-amino-acid polypeptide reads, in one-letter code: Methionine aminopeptidase 1B, chloroplastic (369 aa).

The N-terminal 61 residues, 1-61 (MASSVFLSSF…YSPRQFHVSA (61 aa)), are a transit peptide targeting the chloroplast. Histidine 199 is a substrate binding site. Positions 216, 227, and 290 each coordinate a divalent metal cation. Histidine 297 contacts substrate. Residues glutamate 322 and glutamate 353 each contribute to the a divalent metal cation site.

This sequence belongs to the peptidase M24A family. Methionine aminopeptidase type 1 subfamily. Co(2+) is required as a cofactor. Requires Zn(2+) as cofactor. Mn(2+) serves as cofactor. It depends on Fe(2+) as a cofactor. In terms of tissue distribution, ubiquitous. Preferentially expressed in green tissues.

The protein localises to the plastid. It localises to the chloroplast. The catalysed reaction is Release of N-terminal amino acids, preferentially methionine, from peptides and arylamides.. Its function is as follows. Removes the N-terminal methionine from nascent proteins. The N-terminal methionine is often cleaved when the second residue in the primary sequence is small and uncharged (Met-Ala-, Cys, Gly, Pro, Ser, Thr, or Val). This chain is Methionine aminopeptidase 1B, chloroplastic (MAP1B), found in Arabidopsis thaliana (Mouse-ear cress).